A 493-amino-acid chain; its full sequence is UDP-N-acetylmuramoyl-L-alanyl-D-glutamate--2,6-diaminopimelate ligase (493 aa).

Residue Thr-32 participates in UDP-N-acetyl-alpha-D-muramoyl-L-alanyl-D-glutamate binding. Residue 110–116 (GTNGKTT) participates in ATP binding. Residues Asn-151, 152 to 153 (TT), Ser-179, and Arg-187 each bind UDP-N-acetyl-alpha-D-muramoyl-L-alanyl-D-glutamate. Lys-219 is modified (N6-carboxylysine). Residues Arg-386, 410-413 (DNPR), Gly-460, and Glu-464 contribute to the meso-2,6-diaminopimelate site. The Meso-diaminopimelate recognition motif motif lies at 410–413 (DNPR).

This sequence belongs to the MurCDEF family. MurE subfamily. Mg(2+) is required as a cofactor. In terms of processing, carboxylation is probably crucial for Mg(2+) binding and, consequently, for the gamma-phosphate positioning of ATP.

It is found in the cytoplasm. The catalysed reaction is UDP-N-acetyl-alpha-D-muramoyl-L-alanyl-D-glutamate + meso-2,6-diaminopimelate + ATP = UDP-N-acetyl-alpha-D-muramoyl-L-alanyl-gamma-D-glutamyl-meso-2,6-diaminopimelate + ADP + phosphate + H(+). Its pathway is cell wall biogenesis; peptidoglycan biosynthesis. Its function is as follows. Catalyzes the addition of meso-diaminopimelic acid to the nucleotide precursor UDP-N-acetylmuramoyl-L-alanyl-D-glutamate (UMAG) in the biosynthesis of bacterial cell-wall peptidoglycan. In Lactiplantibacillus plantarum (strain ATCC BAA-793 / NCIMB 8826 / WCFS1) (Lactobacillus plantarum), this protein is UDP-N-acetylmuramoyl-L-alanyl-D-glutamate--2,6-diaminopimelate ligase.